A 121-amino-acid chain; its full sequence is MASKIRKVTNQNMRINSSLSKSSTFSTRLRITDSYLSSPSVTELAPLTLTTGDDFTVTLSVTPTMNSLESQVICPRAYDCKERIPPNQHIVSLELTYHPASIEPTATGSPETRDPDPSAYA.

The disordered stretch occupies residues 101-121 (SIEPTATGSPETRDPDPSAYA). Over residues 111–121 (ETRDPDPSAYA) the composition is skewed to basic and acidic residues.

The protein localises to the mitochondrion. This is an uncharacterized protein from Arabidopsis thaliana (Mouse-ear cress).